Here is a 413-residue protein sequence, read N- to C-terminus: Tyrosine--tRNA ligase (413 aa).

Tyr-34 provides a ligand contact to L-tyrosine. The 'HIGH' region motif lies at 39 to 48 (PTSHSLTVGH). Tyr-164 and Gln-168 together coordinate L-tyrosine. Positions 225-229 (KFGKS) match the 'KMSKS' region motif. Lys-228 lines the ATP pocket. One can recognise an S4 RNA-binding domain in the interval 347-413 (ILLVDALVQT…GKKNNALIVF (67 aa)).

This sequence belongs to the class-I aminoacyl-tRNA synthetase family. TyrS type 1 subfamily. Homodimer.

Its subcellular location is the cytoplasm. It catalyses the reaction tRNA(Tyr) + L-tyrosine + ATP = L-tyrosyl-tRNA(Tyr) + AMP + diphosphate + H(+). In terms of biological role, catalyzes the attachment of tyrosine to tRNA(Tyr) in a two-step reaction: tyrosine is first activated by ATP to form Tyr-AMP and then transferred to the acceptor end of tRNA(Tyr). The protein is Tyrosine--tRNA ligase of Onion yellows phytoplasma (strain OY-M).